Here is a 31-residue protein sequence, read N- to C-terminus: Cytochrome b6-f complex subunit 6 (31 aa).

The chain crosses the membrane as a helical span at residues 3-23 (ILIGYIILLACAFGLAAGLFF).

The protein belongs to the PetL family. As to quaternary structure, the 4 large subunits of the cytochrome b6-f complex are cytochrome b6, subunit IV (17 kDa polypeptide, PetD), cytochrome f and the Rieske protein, while the 4 small subunits are PetG, PetL, PetM and PetN. The complex functions as a dimer.

It localises to the plastid. The protein resides in the chloroplast thylakoid membrane. Its function is as follows. Component of the cytochrome b6-f complex, which mediates electron transfer between photosystem II (PSII) and photosystem I (PSI), cyclic electron flow around PSI, and state transitions. PetL is important for photoautotrophic growth as well as for electron transfer efficiency and stability of the cytochrome b6-f complex. The sequence is that of Cytochrome b6-f complex subunit 6 from Rhodomonas salina (Cryptomonas salina).